The sequence spans 353 residues: UDP-N-acetylglucosamine--N-acetylmuramyl-(pentapeptide) pyrophosphoryl-undecaprenol N-acetylglucosamine transferase (353 aa).

Residues 10-12, asparagine 124, serine 183, and glutamine 283 contribute to the UDP-N-acetyl-alpha-D-glucosamine site; that span reads TGG.

Belongs to the glycosyltransferase 28 family. MurG subfamily.

It localises to the cell inner membrane. It catalyses the reaction di-trans,octa-cis-undecaprenyl diphospho-N-acetyl-alpha-D-muramoyl-L-alanyl-D-glutamyl-meso-2,6-diaminopimeloyl-D-alanyl-D-alanine + UDP-N-acetyl-alpha-D-glucosamine = di-trans,octa-cis-undecaprenyl diphospho-[N-acetyl-alpha-D-glucosaminyl-(1-&gt;4)]-N-acetyl-alpha-D-muramoyl-L-alanyl-D-glutamyl-meso-2,6-diaminopimeloyl-D-alanyl-D-alanine + UDP + H(+). The protein operates within cell wall biogenesis; peptidoglycan biosynthesis. Functionally, cell wall formation. Catalyzes the transfer of a GlcNAc subunit on undecaprenyl-pyrophosphoryl-MurNAc-pentapeptide (lipid intermediate I) to form undecaprenyl-pyrophosphoryl-MurNAc-(pentapeptide)GlcNAc (lipid intermediate II). The chain is UDP-N-acetylglucosamine--N-acetylmuramyl-(pentapeptide) pyrophosphoryl-undecaprenol N-acetylglucosamine transferase from Helicobacter acinonychis (strain Sheeba).